We begin with the raw amino-acid sequence, 444 residues long: MAPSIQSLSMIHDSQECIKPIPAFSCCYLLRSCVRHASLYIGSTPDPARRLAQHNGDRYGAAKRTLRENLRPWEMVAIVSGFTSRVAALQFEWAWQNTKVSRHADLDGNATQELGVRICPRTAKEVKRVAKPRTSLTNILANLHLLLRSPYFSKWPIEVRFFSADVHRVWQVWLQRVDGLLNDGIRVVTDFAPDGISEVEGKELLAGAGRVGTLDVGYNSIKEYVEKSQFLLEDGERINCGVCKQRLILQHDIIAVCSHSSCHCAAHLSCLSSHFLKDKDSDSELVPREGTCPTCYSKLEWLTMMKEISLRLRGQAEVNRLFGRRQRAGTPKGQGLKSVRGRGHSEDENESDALQVSTGLDTVNLPPCSDGPWTIDCAIGVLGGIAHRPGGVSSGNDSDATVTPEIETHPQRCRRNQNTRTQRLGLQKSAMINLSDWYDAEVIE.

In terms of domain architecture, GIY-YIG spans 23 to 105 (AFSCCYLLRS…QNTKVSRHAD (83 aa)). An SLX1-type zinc finger spans residues 240 to 295 (CGVCKQRLILQHDIIAVCSHSSCHCAAHLSCLSSHFLKDKDSDSELVPREGTCPTC). The interval 324-354 (RRQRAGTPKGQGLKSVRGRGHSEDENESDAL) is disordered.

Belongs to the SLX1 family. Forms a heterodimer with SLX4. A divalent metal cation is required as a cofactor.

It is found in the nucleus. Functionally, catalytic subunit of the SLX1-SLX4 structure-specific endonuclease that resolves DNA secondary structures generated during DNA repair and recombination. Has endonuclease activity towards branched DNA substrates, introducing single-strand cuts in duplex DNA close to junctions with ss-DNA. This chain is Structure-specific endonuclease subunit SLX1, found in Paracoccidioides lutzii (strain ATCC MYA-826 / Pb01) (Paracoccidioides brasiliensis).